The sequence spans 887 residues: Translation initiation factor IF-2 (887 aa).

The interval 1–291 (MTDQADTSER…RRRVERERKK (291 aa)) is disordered. The segment covering 58–117 (AAPAAAPAAAPAAAEEVAKKPVAAPEVKPAAPVEERPAPVAKAAPEVKAVPAPAPAAAPA) has biased composition (low complexity). 4 stretches are compositionally biased toward basic and acidic residues: residues 148–178 (SAREREGEDRRRAEEEARRFAEEDARREAER), 185–194 (AAEEASRHTA), 201–215 (RAAEEAKRRLDDDRP), and 267–276 (AFDDESERQR). The region spanning 385–553 (ARAPVVTVMG…TILLQAELLD (169 aa)) is the tr-type G domain. A G1 region spans residues 394-401 (GHVDHGKT). 394-401 (GHVDHGKT) contacts GTP. A G2 region spans residues 419 to 423 (GITQH). Residues 441–444 (DTPG) form a G3 region. GTP-binding positions include 441–445 (DTPGH) and 495–498 (NKMD). Residues 495-498 (NKMD) are G4. A G5 region spans residues 531-533 (SAK).

Belongs to the TRAFAC class translation factor GTPase superfamily. Classic translation factor GTPase family. IF-2 subfamily.

Its subcellular location is the cytoplasm. In terms of biological role, one of the essential components for the initiation of protein synthesis. Protects formylmethionyl-tRNA from spontaneous hydrolysis and promotes its binding to the 30S ribosomal subunits. Also involved in the hydrolysis of GTP during the formation of the 70S ribosomal complex. This chain is Translation initiation factor IF-2, found in Parvibaculum lavamentivorans (strain DS-1 / DSM 13023 / NCIMB 13966).